Reading from the N-terminus, the 964-residue chain is DNA primase (964 aa).

A disordered region spans residues 807 to 844 (SAPSLPTLVGRGGGGEGGASSDYEEERAVGSDEEEDDD).

Belongs to the herpesviridae DNA primase family. As to quaternary structure, associates with the helicase and the primase-associated factor to form the helicase-primase factor.

It localises to the host nucleus. Functionally, essential component of the helicase/primase complex. Unwinds the DNA at the replication forks and generates single-stranded DNA for both leading and lagging strand synthesis. The primase initiates primer synthesis and thereby produces large amount of short RNA primers on the lagging strand that the polymerase elongates using dNTPs. The protein is DNA primase (UL70) of Mus musculus (Mouse).